The chain runs to 4134 residues: DNA-dependent protein kinase catalytic subunit (4134 aa).

HEAT repeat units follow at residues 900–937 (VIYLDVFLPRVTDLALSASDRQTKIAACELLHSIVAYM), 1000–1036 (QDTVTFLEAILSGIVDPVDSTLRDFCGQCVREFLKWS), and 1050–1085 (ANTKSLFKRLYSLALHPSAFKRLGAALAFNSIYREF). 2 TPR repeats span residues 1265–1305 (YNTF…HDIH) and 1722–1755 (PMSSDEFPKGTLKHNNYVDCTKKFLDALELSQSP). Serine 2055 bears the Phosphoserine; by autocatalysis mark. Residues 2207–2240 (DEILANRLLEFLMKNAFHQKRAVFRHNLEIIKTV) form a TPR 3 repeat. The residue at position 2609 (threonine 2609) is a Phosphothreonine; by autocatalysis. The span at 2611 to 2629 (ASQSTNRNSSQERSLSISG) shows a compositional bias: polar residues. Residues 2611–2631 (ASQSTNRNSSQERSLSISGSV) are disordered. At serine 2612 the chain carries Phosphoserine; by autocatalysis. Phosphothreonine; by autocatalysis occurs at positions 2638 and 2647. Residues 2880–3545 (NVSTSCLASL…IYPFTISSES (666 aa)) enclose the FAT domain. The region spanning 3728-4059 (FDERIMVLES…VSYVKRKLTG (332 aa)) is the PI3K/PI4K catalytic domain. The tract at residues 3734-3740 (VLESLRK) is G-loop. The interval 3925–3933 (GIGDRHLSN) is catalytic loop. Residues 3945–3970 (GIDFGHAFGSATQFLPVPELMPFRLT) are activation loop. Residues 4102 to 4134 (DRLSEETQVRCLIDQATDPNLLGRVWEGWEPWM) enclose the FATC domain.

This sequence belongs to the PI3/PI4-kinase family. DNA-PK is a heterotrimer of PRKDC and the Ku dimer (composed of XRCC6/Ku70 and XRCC5/Ku86). Component of the core long-range non-homologous end joining (NHEJ) complex (also named DNA-PK complex) composed of PRKDC, LIG4, XRCC4, XRCC6/Ku70, XRCC5/Ku86 and NHEJ1/XLF. Additional component of the NHEJ complex includes PAXX. Following autophosphorylation, PRKDC dissociates from DNA. Post-translationally, autophosphorylated at two clusters, the T2609 cluster and the S2056 cluster. Autophosphorylated on Ser-2055, Thr-2609, Thr-2638 and Thr-2647. Ser-2055 and Thr-2609 are DNA damage-inducible phosphorylation sites (inducible with ionizing radiation, IR) dephosphorylated by PPP5C. Autophosphorylation induces a conformational change that leads to remodeling of the DNA-PK complex, requisite for efficient end processing and DNA repair. Autophosphorylation in trans within DNA-PK complexes loaded on DNA ends leads to the dissociation of PRKDC from DNA and the transition into the short-range NHEJ complex. Autophosphorylation of the T2609 cluster is required for hematopoietic development and protein synthesis in erythrocytes precursors.

Its subcellular location is the nucleus. It localises to the nucleolus. It catalyses the reaction L-seryl-[protein] + ATP = O-phospho-L-seryl-[protein] + ADP + H(+). The enzyme catalyses L-threonyl-[protein] + ATP = O-phospho-L-threonyl-[protein] + ADP + H(+). Functionally, serine/threonine-protein kinase that acts as a molecular sensor for DNA damage. Involved in DNA nonhomologous end joining (NHEJ) required for double-strand break (DSB) repair and V(D)J recombination. Must be bound to DNA to express its catalytic properties. Promotes processing of hairpin DNA structures in V(D)J recombination by activation of the hairpin endonuclease artemis (DCLRE1C). Recruited by XRCC5 and XRCC6 to DNA ends and is required to (1) protect and align broken ends of DNA, thereby preventing their degradation, (2) and sequester the DSB for repair by NHEJ. Acts as a scaffold protein to aid the localization of DNA repair proteins to the site of damage. The assembly of the DNA-PK complex at DNA ends is also required for the NHEJ ligation step. Found at the ends of chromosomes, suggesting a further role in the maintenance of telomeric stability and the prevention of chromosomal end fusion. As part of the DNA-PK complex, involved in the early steps of ribosome assembly by promoting the processing of precursor rRNA into mature 18S rRNA in the small-subunit processome. Recognizes the substrate consensus sequence [ST]-Q. Phosphorylates 'Ser-139' of histone variant H2AX, thereby regulating DNA damage response mechanism. In Gallus gallus (Chicken), this protein is DNA-dependent protein kinase catalytic subunit (PRKDC).